Reading from the N-terminus, the 321-residue chain is Beta-ketoacyl-[acyl-carrier-protein] synthase III (321 aa).

Active-site residues include C115 and H248. The interval 249–253 (QANIR) is ACP-binding. Residue N278 is part of the active site.

The protein belongs to the thiolase-like superfamily. FabH family. Homodimer.

The protein localises to the cytoplasm. It catalyses the reaction malonyl-[ACP] + acetyl-CoA + H(+) = 3-oxobutanoyl-[ACP] + CO2 + CoA. It participates in lipid metabolism; fatty acid biosynthesis. Catalyzes the condensation reaction of fatty acid synthesis by the addition to an acyl acceptor of two carbons from malonyl-ACP. Catalyzes the first condensation reaction which initiates fatty acid synthesis and may therefore play a role in governing the total rate of fatty acid production. Possesses both acetoacetyl-ACP synthase and acetyl transacylase activities. Its substrate specificity determines the biosynthesis of branched-chain and/or straight-chain of fatty acids. The polypeptide is Beta-ketoacyl-[acyl-carrier-protein] synthase III (Aromatoleum aromaticum (strain DSM 19018 / LMG 30748 / EbN1) (Azoarcus sp. (strain EbN1))).